The chain runs to 207 residues: Small ribosomal subunit protein uS4c (207 aa).

The region spanning 92–156 (MRLDNILFRL…YQSIITKRIE (65 aa)) is the S4 RNA-binding domain.

The protein belongs to the universal ribosomal protein uS4 family. Part of the 30S ribosomal subunit. Contacts protein S5. The interaction surface between S4 and S5 is involved in control of translational fidelity.

It is found in the plastid. Its subcellular location is the chloroplast. Functionally, one of the primary rRNA binding proteins, it binds directly to 16S rRNA where it nucleates assembly of the body of the 30S subunit. With S5 and S12 plays an important role in translational accuracy. The chain is Small ribosomal subunit protein uS4c (rps4) from Equisetum pratense (Meadow horsetail).